A 227-amino-acid polypeptide reads, in one-letter code: 2-C-methyl-D-erythritol 4-phosphate cytidylyltransferase (227 aa).

Belongs to the IspD/TarI cytidylyltransferase family. IspD subfamily.

It carries out the reaction 2-C-methyl-D-erythritol 4-phosphate + CTP + H(+) = 4-CDP-2-C-methyl-D-erythritol + diphosphate. It participates in isoprenoid biosynthesis; isopentenyl diphosphate biosynthesis via DXP pathway; isopentenyl diphosphate from 1-deoxy-D-xylulose 5-phosphate: step 2/6. In terms of biological role, catalyzes the formation of 4-diphosphocytidyl-2-C-methyl-D-erythritol from CTP and 2-C-methyl-D-erythritol 4-phosphate (MEP). The chain is 2-C-methyl-D-erythritol 4-phosphate cytidylyltransferase from Thermosipho melanesiensis (strain DSM 12029 / CIP 104789 / BI429).